The primary structure comprises 444 residues: Exodeoxyribonuclease 7 large subunit (444 aa).

Belongs to the XseA family. Heterooligomer composed of large and small subunits.

The protein localises to the cytoplasm. The enzyme catalyses Exonucleolytic cleavage in either 5'- to 3'- or 3'- to 5'-direction to yield nucleoside 5'-phosphates.. In terms of biological role, bidirectionally degrades single-stranded DNA into large acid-insoluble oligonucleotides, which are then degraded further into small acid-soluble oligonucleotides. The sequence is that of Exodeoxyribonuclease 7 large subunit from Xylella fastidiosa (strain M23).